A 257-amino-acid polypeptide reads, in one-letter code: Thioesterase frbE (257 aa).

This sequence belongs to the AMT4 thioesterase family.

It participates in antifungal biosynthesis. Its function is as follows. Thioesterase; part of the gene cluster that mediates the biosynthesis of the antifungal antibiotic FR901469, an inhibitor of beta-1,3-glucansynthase, exerting antifungal activity against the pathogenes Candida albicans and Aspergillus fumigatus. FR901469 is a cyclic depsipeptide containing 12 amino acid residues and a fatty acid chain. The NRPS frbI contains 12 modules responsible for the formation of the depsipeptide backbone which is denoted as Acyl-Thr-Ala-Tyr-Val-4OHPro-Thr-Thr-3OHPro-threo3OHGln-Gly-Thr-Orn-OH (C71H116N14O23). The PKS frbB is probably involved in the production of the hydrocarbon chain, and the acyl-CoA ligase frbC might be involved in the transport of the chain to the peptide ptoduct of frbI. Because FR901469 contains 3 hydroxylated amino acid residues, the 3 oxygenases frbA, frbH, and frbJ might be participating in amino acid hydroxylation. As no thioesterase domains were detected in frbI or frbB, the thioesterases frbD and frbE may instead release and cyclize the products of the NRPS and PKS, respectively. This Dothideomycetidae sp. (strain 11243) (Fungal sp. (strain No.11243)) protein is Thioesterase frbE.